Consider the following 444-residue polypeptide: 23S rRNA (uracil(1939)-C(5))-methyltransferase RlmD (444 aa).

Residues 5 to 67 (RNRLDRTPFQ…RHFDEAKTVE (63 aa)) enclose the TRAM domain. Positions 80, 86, 89, and 168 each coordinate [4Fe-4S] cluster. S-adenosyl-L-methionine is bound by residues glutamine 276, phenylalanine 305, asparagine 310, glutamate 326, aspartate 353, and aspartate 374. The Nucleophile role is filled by cysteine 400.

It belongs to the class I-like SAM-binding methyltransferase superfamily. RNA M5U methyltransferase family. RlmD subfamily.

It catalyses the reaction uridine(1939) in 23S rRNA + S-adenosyl-L-methionine = 5-methyluridine(1939) in 23S rRNA + S-adenosyl-L-homocysteine + H(+). Functionally, catalyzes the formation of 5-methyl-uridine at position 1939 (m5U1939) in 23S rRNA. The sequence is that of 23S rRNA (uracil(1939)-C(5))-methyltransferase RlmD from Xanthomonas euvesicatoria pv. vesicatoria (strain 85-10) (Xanthomonas campestris pv. vesicatoria).